We begin with the raw amino-acid sequence, 488 residues long: 3-octaprenyl-4-hydroxybenzoate carboxy-lyase (488 aa).

Asparagine 172 contributes to the Mn(2+) binding site. Prenylated FMN-binding positions include 175 to 177 (IYR), 189 to 191 (RWL), and 194 to 195 (RG). Glutamate 238 serves as a coordination point for Mn(2+). The active-site Proton donor is the aspartate 287.

The protein belongs to the UbiD family. As to quaternary structure, homohexamer. It depends on prenylated FMN as a cofactor. Mn(2+) is required as a cofactor.

Its subcellular location is the cell membrane. The enzyme catalyses a 4-hydroxy-3-(all-trans-polyprenyl)benzoate + H(+) = a 2-(all-trans-polyprenyl)phenol + CO2. Its pathway is cofactor biosynthesis; ubiquinone biosynthesis. Catalyzes the decarboxylation of 3-octaprenyl-4-hydroxy benzoate to 2-octaprenylphenol, an intermediate step in ubiquinone biosynthesis. The protein is 3-octaprenyl-4-hydroxybenzoate carboxy-lyase of Pseudomonas putida (strain ATCC 47054 / DSM 6125 / CFBP 8728 / NCIMB 11950 / KT2440).